The primary structure comprises 283 residues: Bifunctional protein FolD (283 aa).

Residues 166–168 (GRS) and Ser191 contribute to the NADP(+) site.

This sequence belongs to the tetrahydrofolate dehydrogenase/cyclohydrolase family. Homodimer.

The catalysed reaction is (6R)-5,10-methylene-5,6,7,8-tetrahydrofolate + NADP(+) = (6R)-5,10-methenyltetrahydrofolate + NADPH. It catalyses the reaction (6R)-5,10-methenyltetrahydrofolate + H2O = (6R)-10-formyltetrahydrofolate + H(+). The protein operates within one-carbon metabolism; tetrahydrofolate interconversion. Catalyzes the oxidation of 5,10-methylenetetrahydrofolate to 5,10-methenyltetrahydrofolate and then the hydrolysis of 5,10-methenyltetrahydrofolate to 10-formyltetrahydrofolate. This Pediococcus pentosaceus (strain ATCC 25745 / CCUG 21536 / LMG 10740 / 183-1w) protein is Bifunctional protein FolD.